A 302-amino-acid polypeptide reads, in one-letter code: Sulfate adenylyltransferase subunit 2 (302 aa).

The tract at residues 280-302 (RQGRLIDSDQSASMEQKKRQGYF) is disordered.

The protein belongs to the PAPS reductase family. CysD subfamily. In terms of assembly, heterodimer composed of CysD, the smaller subunit, and CysN.

It carries out the reaction sulfate + ATP + H(+) = adenosine 5'-phosphosulfate + diphosphate. Its pathway is sulfur metabolism; hydrogen sulfide biosynthesis; sulfite from sulfate: step 1/3. Functionally, with CysN forms the ATP sulfurylase (ATPS) that catalyzes the adenylation of sulfate producing adenosine 5'-phosphosulfate (APS) and diphosphate, the first enzymatic step in sulfur assimilation pathway. APS synthesis involves the formation of a high-energy phosphoric-sulfuric acid anhydride bond driven by GTP hydrolysis by CysN coupled to ATP hydrolysis by CysD. This Shewanella baltica (strain OS223) protein is Sulfate adenylyltransferase subunit 2.